The following is a 333-amino-acid chain: cGAMP-activated phospholipase (333 aa).

The region spanning 10 to 191 is the PNPLA domain; it reads LALSGGGYRG…VGNAPGLFGL (182 aa). The GXGXXG motif lies at 14 to 19; sequence GGGYRG. The short motif at 46–50 is the GXSXG element; sequence GTSAG. Residue S48 is the Nucleophile of the active site. D178 acts as the Proton acceptor in catalysis. The short motif at 178-180 is the DGA/G element; sequence DGG.

Belongs to the patatin family.

The catalysed reaction is a 1,2-diacyl-sn-glycero-3-phosphocholine + H2O = a 2-acyl-sn-glycero-3-phosphocholine + a fatty acid + H(+). It carries out the reaction 1,2-di-(9Z-octadecenoyl)-sn-glycero-3-phosphoethanolamine + 2 H2O = sn-glycero-3-phosphoethanolamine + 2 (9Z)-octadecenoate + 2 H(+). With respect to regulation, phospholipase activity is specifically activated upon cGAMP binding, which is produced by the cognate cyclic nucleotide synthase encoded in the same operon. Is not activated by cyclic dinucleotides 2',3'-cGAMP, c-diAMP or 3',3'-c-diGMP. Its function is as follows. Effector phospholipase of a CBASS antiviral system. CBASS (cyclic oligonucleotide-based antiphage signaling system) provides immunity against bacteriophages. The CD-NTase protein (CdnA) synthesizes cyclic nucleotides in response to infection; these serve as specific second messenger signals. The signals activate a diverse range of effectors, leading to bacterial cell death and thus abortive phage infection. A type II-A(GA) CBASS system. Phospholipase that is activated upon binding to the cyclic dinucleotide (CDN) second messenger 3',3'-cyclic GMP-AMP (cGAMP). Degrades phospholipids in the cell membrane. Functionally, the capV-cdnA-cap2-cap3 operon provides about 10(4)-fold protection in strain BWHPSA011 against infection by phage PaMx41. In P.aeruginosa strain PAO1 it confers protection against phages PaMx41 and JBD18 but not JBD67 (JBD18 and JBD67 do not replicate in BWHPSA011 / Pa011). When acb2 in JBD67 is deleted this CBASS operon then protects against JDB67 also. This CBASS system limits prophage induction of lysogenized JBD67 as well as viral lytic replication. This Pseudomonas aeruginosa (strain BWHPSA011 / Pa011) protein is cGAMP-activated phospholipase.